A 498-amino-acid polypeptide reads, in one-letter code: Calcium-binding tyrosine phosphorylation-regulated protein (498 aa).

The region spanning 12-49 is the RIIa domain; sequence YGLKTLLEGVSRAILKINPPNITQFAAVYFKELIVFRE. Disordered regions lie at residues 74-107, 135-164, and 247-279; these read GTTQ…TDTE, EETP…SPAA, and VDLG…AYDQ. Residues 145 to 164 show a composition bias toward low complexity; it reads SPKPSTPKAVTPPSSPSPAA.

In terms of assembly, interacts with FSCB. Post-translationally, phosphorylated on tyrosine residues during in vitro capacitation. Dephosphorylation affects its ability to bind calcium. As to expression, expressed in testis.

The protein resides in the cytoplasm. It is found in the cytoskeleton. The protein localises to the cell projection. It localises to the cilium. Its subcellular location is the flagellum. In terms of biological role, may function as a regulator of both motility- and head-associated functions such as capacitation and the acrosome reaction. Binds calcium in vitro. This Vulpes vulpes (Red fox) protein is Calcium-binding tyrosine phosphorylation-regulated protein (CABYR).